Consider the following 473-residue polypeptide: UDP-N-acetylmuramoylalanine--D-glutamate ligase (473 aa).

120–126 (GSNGKTT) is a binding site for ATP.

This sequence belongs to the MurCDEF family.

It localises to the cytoplasm. The enzyme catalyses UDP-N-acetyl-alpha-D-muramoyl-L-alanine + D-glutamate + ATP = UDP-N-acetyl-alpha-D-muramoyl-L-alanyl-D-glutamate + ADP + phosphate + H(+). It functions in the pathway cell wall biogenesis; peptidoglycan biosynthesis. Cell wall formation. Catalyzes the addition of glutamate to the nucleotide precursor UDP-N-acetylmuramoyl-L-alanine (UMA). The chain is UDP-N-acetylmuramoylalanine--D-glutamate ligase from Nitrosospira multiformis (strain ATCC 25196 / NCIMB 11849 / C 71).